The sequence spans 136 residues: Cell wall synthesis protein CwsA (136 aa).

A helical membrane pass occupies residues 94-114 (LLIAAVAVTVLGGGAAAFSIV).

The protein belongs to the CwsA family. In terms of assembly, interacts with CrgA and Wag31.

The protein resides in the cell membrane. Functionally, required for regulated cell division, cell wall synthesis and the maintenance of cell shape. In Mycolicibacterium smegmatis (strain ATCC 700084 / mc(2)155) (Mycobacterium smegmatis), this protein is Cell wall synthesis protein CwsA.